The chain runs to 1019 residues: Antigenic heat-stable 120 kDa protein (1019 aa).

A disordered region spans residues 1–33 (MSKNDNQDISEFDPLNREFTEAEKQQQMQQEQE). Positions 14–24 (PLNREFTEAEK) are enriched in basic and acidic residues.

Its subcellular location is the cytoplasm. This is Antigenic heat-stable 120 kDa protein (sca4) from Rickettsia typhi (strain ATCC VR-144 / Wilmington).